A 164-amino-acid polypeptide reads, in one-letter code: CASP-like protein 1C1 (164 aa).

Over Met1–Arg15 the chain is Cytoplasmic. A helical membrane pass occupies residues Gly16–His36. Residues Glu37–Lys56 are Extracellular-facing. A helical membrane pass occupies residues Ala57–Pro77. The Cytoplasmic segment spans residues Lys78–Arg83. The helical transmembrane segment at Leu84–Ile104 threads the bilayer. The Extracellular segment spans residues Ala105–Arg132. Residues Val133–Ile153 form a helical membrane-spanning segment. Residues Ser154–Val164 are Cytoplasmic-facing.

This sequence belongs to the Casparian strip membrane proteins (CASP) family. Homodimer and heterodimers.

Its subcellular location is the cell membrane. The protein is CASP-like protein 1C1 of Populus trichocarpa (Western balsam poplar).